A 572-amino-acid polypeptide reads, in one-letter code: Proline--tRNA ligase (572 aa).

The protein belongs to the class-II aminoacyl-tRNA synthetase family. ProS type 1 subfamily. Homodimer.

It localises to the cytoplasm. The enzyme catalyses tRNA(Pro) + L-proline + ATP = L-prolyl-tRNA(Pro) + AMP + diphosphate. In terms of biological role, catalyzes the attachment of proline to tRNA(Pro) in a two-step reaction: proline is first activated by ATP to form Pro-AMP and then transferred to the acceptor end of tRNA(Pro). As ProRS can inadvertently accommodate and process non-cognate amino acids such as alanine and cysteine, to avoid such errors it has two additional distinct editing activities against alanine. One activity is designated as 'pretransfer' editing and involves the tRNA(Pro)-independent hydrolysis of activated Ala-AMP. The other activity is designated 'posttransfer' editing and involves deacylation of mischarged Ala-tRNA(Pro). The misacylated Cys-tRNA(Pro) is not edited by ProRS. The polypeptide is Proline--tRNA ligase (Cronobacter sakazakii (strain ATCC BAA-894) (Enterobacter sakazakii)).